Reading from the N-terminus, the 444-residue chain is Trigger factor (444 aa).

The 86-residue stretch at 166 to 251 folds into the PPIase FKBP-type domain; that stretch reads GDQIVIDFKG…VKAVKAPKPA (86 aa).

The protein belongs to the FKBP-type PPIase family. Tig subfamily.

The protein resides in the cytoplasm. It carries out the reaction [protein]-peptidylproline (omega=180) = [protein]-peptidylproline (omega=0). In terms of biological role, involved in protein export. Acts as a chaperone by maintaining the newly synthesized protein in an open conformation. Functions as a peptidyl-prolyl cis-trans isomerase. This is Trigger factor from Cereibacter sphaeroides (strain ATCC 17025 / ATH 2.4.3) (Rhodobacter sphaeroides).